A 343-amino-acid polypeptide reads, in one-letter code: Phosphoribosylformylglycinamidine cyclo-ligase (343 aa).

It belongs to the AIR synthase family.

The protein localises to the cytoplasm. It catalyses the reaction 2-formamido-N(1)-(5-O-phospho-beta-D-ribosyl)acetamidine + ATP = 5-amino-1-(5-phospho-beta-D-ribosyl)imidazole + ADP + phosphate + H(+). The protein operates within purine metabolism; IMP biosynthesis via de novo pathway; 5-amino-1-(5-phospho-D-ribosyl)imidazole from N(2)-formyl-N(1)-(5-phospho-D-ribosyl)glycinamide: step 2/2. This is Phosphoribosylformylglycinamidine cyclo-ligase from Carboxydothermus hydrogenoformans (strain ATCC BAA-161 / DSM 6008 / Z-2901).